Consider the following 50-residue polypeptide: Photosystem II reaction center protein M (50 aa).

A helical membrane pass occupies residues 7–27 (GFVASLLFVGVPTIFLIGLFI).

This sequence belongs to the PsbM family. As to quaternary structure, PSII is composed of 1 copy each of membrane proteins PsbA, PsbB, PsbC, PsbD, PsbE, PsbF, PsbH, PsbI, PsbJ, PsbK, PsbL, PsbM, PsbT, PsbX, PsbY, Psb30/Ycf12, peripheral proteins PsbO, CyanoQ (PsbQ), PsbU, PsbV and a large number of cofactors. It forms dimeric complexes.

The protein resides in the cellular thylakoid membrane. One of the components of the core complex of photosystem II (PSII). PSII is a light-driven water:plastoquinone oxidoreductase that uses light energy to abstract electrons from H(2)O, generating O(2) and a proton gradient subsequently used for ATP formation. It consists of a core antenna complex that captures photons, and an electron transfer chain that converts photonic excitation into a charge separation. This subunit is found at the monomer-monomer interface. This Prochlorococcus marinus (strain MIT 9515) protein is Photosystem II reaction center protein M.